The following is a 252-amino-acid chain: 5'-nucleotidase SurE (252 aa).

A divalent metal cation contacts are provided by Asp8, Asp9, Ser39, and Asn91.

The protein belongs to the SurE nucleotidase family. A divalent metal cation serves as cofactor.

The protein resides in the cytoplasm. The catalysed reaction is a ribonucleoside 5'-phosphate + H2O = a ribonucleoside + phosphate. In terms of biological role, nucleotidase that shows phosphatase activity on nucleoside 5'-monophosphates. The polypeptide is 5'-nucleotidase SurE (Bordetella pertussis (strain Tohama I / ATCC BAA-589 / NCTC 13251)).